Here is a 372-residue protein sequence, read N- to C-terminus: MHEKDLLLLAESFKRYYFEHFERIPVPDRAAQREFGYQRFGGGMVRHMRVKGSDELRLLLMQNSPSDVYCSNGIYSFPELPMSDKDWKEADLIFDIDAKDLGLPCRKDHTFRRCSSCGRSHSGDGCPRCGPGAHDQISVLCKDCIGGAKKEVEKLMHILEEDLGVGRDSVVVYFSGNEGFHVHIGGTQFQGLGSRERGELADYVRFVGAVPQAFGMGRNGAARRDFDYDDEGGWKGRLHREFFGPKSRSSVAITAAIKEGHRAFGERLKQISPVLGANIDPHVTTDIHRIFRLPGSLNGKSGLAKIPCINLDKFDPGSDACLIDSDEVQVTADMPMRLKLGGRRFGPYNGEAVSVPRFAAAYMVCKGLASAA.

Catalysis depends on residues Asp-95, Asp-97, and Asp-280.

This sequence belongs to the eukaryotic-type primase small subunit family. As to quaternary structure, heterodimer of a small subunit (PriS) and a large subunit (PriL). Mg(2+) is required as a cofactor. Mn(2+) serves as cofactor.

Its function is as follows. Catalytic subunit of DNA primase, an RNA polymerase that catalyzes the synthesis of short RNA molecules used as primers for DNA polymerase during DNA replication. The small subunit contains the primase catalytic core and has DNA synthesis activity on its own. Binding to the large subunit stabilizes and modulates the activity, increasing the rate of DNA synthesis while decreasing the length of the DNA fragments, and conferring RNA synthesis capability. The DNA polymerase activity may enable DNA primase to also catalyze primer extension after primer synthesis. May also play a role in DNA repair. This is DNA primase small subunit PriS from Cenarchaeum symbiosum (strain A).